The following is a 403-amino-acid chain: Malate dehydrogenase, chloroplastic (403 aa).

A chloroplast-targeting transit peptide spans 1–80 (MATATSASLF…DKKPYGFKIN (80 aa)). NAD(+) contacts are provided by residues 89 to 95 (GAAGGIG) and D115. Substrate is bound by residues R162 and R168. Residues N175 and 198–200 (ISN) contribute to the NAD(+) site. Residues N200 and R234 each coordinate substrate. H258 serves as the catalytic Proton acceptor. M309 is a binding site for NAD(+).

It belongs to the LDH/MDH superfamily. MDH type 1 family. In terms of assembly, homodimer. As to expression, expressed in rosette leaves. Expressed in meristematic regions of roots and shoots, cotyledons, young leaves, trichomes, stamen, pollen, tapetum, gynoecium and ovules.

The protein resides in the plastid. The protein localises to the chloroplast stroma. It catalyses the reaction (S)-malate + NAD(+) = oxaloacetate + NADH + H(+). Its function is as follows. Catalyzes a reversible NAD-dependent dehydrogenase reaction involved in central metabolism and redox homeostasis between organelle compartments. Plays a key role in the metabolism of dark chloroplasts and non-green plastids. Essential for embryo viability. Plays an essential role in heterotrophic metabolism in embryos, and autotrophic metabolism in photosynthetic tissues as well. In Arabidopsis thaliana (Mouse-ear cress), this protein is Malate dehydrogenase, chloroplastic.